The primary structure comprises 92 residues: Long neurotoxin 3FTx-Oxy2 (92 aa).

An N-terminal signal peptide occupies residues 1–21 (MKTLLLTLVVVTIVCLDLGYT). Cystine bridges form between Cys-24–Cys-42, Cys-35–Cys-63, Cys-67–Cys-79, and Cys-80–Cys-85.

The protein belongs to the three-finger toxin family. Long-chain subfamily. Type II alpha-neurotoxin sub-subfamily. Expressed by the venom gland.

It is found in the secreted. In terms of biological role, binds with high affinity to muscular (alpha-1/CHRNA1) and neuronal (alpha-7/CHRNA7) nicotinic acetylcholine receptor (nAChR) and inhibits acetylcholine from binding to the receptor, thereby impairing neuromuscular and neuronal transmission. The polypeptide is Long neurotoxin 3FTx-Oxy2 (Oxyuranus microlepidotus (Inland taipan)).